Here is a 139-residue protein sequence, read N- to C-terminus: Large ribosomal subunit protein uL16 (139 aa).

The disordered stretch occupies residues 74-94 (LTKKPAETRQGSGKGSPESWV).

It belongs to the universal ribosomal protein uL16 family. As to quaternary structure, part of the 50S ribosomal subunit.

Its function is as follows. Binds 23S rRNA and is also seen to make contacts with the A and possibly P site tRNAs. This chain is Large ribosomal subunit protein uL16, found in Saccharopolyspora erythraea (strain ATCC 11635 / DSM 40517 / JCM 4748 / NBRC 13426 / NCIMB 8594 / NRRL 2338).